Consider the following 128-residue polypeptide: Small ribosomal subunit protein uS13 (128 aa).

Residues 97-128 (PVRGQRTRSNARTRKGPRPSRIKTKKKKEQTV) form a disordered region. The span at 101-128 (QRTRSNARTRKGPRPSRIKTKKKKEQTV) shows a compositional bias: basic residues.

The protein belongs to the universal ribosomal protein uS13 family. In terms of assembly, part of the 30S ribosomal subunit. Forms a loose heterodimer with protein S19. Forms two bridges to the 50S subunit in the 70S ribosome.

Its function is as follows. Located at the top of the head of the 30S subunit, it contacts several helices of the 16S rRNA. In the 70S ribosome it contacts the 23S rRNA (bridge B1a) and protein L5 of the 50S subunit (bridge B1b), connecting the 2 subunits; these bridges are implicated in subunit movement. Contacts the tRNAs in the A and P-sites. This is Small ribosomal subunit protein uS13 from Pseudothermotoga lettingae (strain ATCC BAA-301 / DSM 14385 / NBRC 107922 / TMO) (Thermotoga lettingae).